The following is a 1294-amino-acid chain: CLIP-associating protein 2 (1294 aa).

Positions 1-61 are disordered; it reads MAMGDDKSFD…KVGGASKEGG (61 aa). Phosphoserine is present on residues S8 and S14. Over residues 47-61 the composition is skewed to gly residues; that stretch reads SAGGPKVGGASKEGG. Residues 60 to 311 are TOG 1; it reads GGAGAVDEDD…KSLQTYLKSS (252 aa). 3 HEAT repeats span residues 173–208, 209–245, and 250–287; these read HGAEAIVPTLFNLVPNSAKVMATSGCAAIRFIIRHT, HVPRLIPLITSNCTSKSVPVRRRSFEFLDLLLQEWQT, and RHAAVLVETIKKGIHDADAEARVEARKTYMGLRNHFPG. The segment at 314–368 is disordered; that stretch reads VASLPQSDRSSSSSQESLNRPFSSKWSTANPSTVAGRVSAGSSKASSLPGSLQRS. Residues S316, S327, and S330 each carry the phosphoserine modification. Low complexity predominate over residues 316-334; the sequence is SLPQSDRSSSSSQESLNRP. 2 stretches are compositionally biased toward polar residues: residues 335-346 and 353-367; these read FSSKWSTANPST and AGSSKASSLPGSLQR. S360, S368, S370, and S407 each carry phosphoserine. Positions 409–467 are disordered; the sequence is EDTSDKLDGTASEDGRVRAKLSAPLAGMGNAKADSRGRSRTKMVSQSQPGSRSGSPGRV. Residues 411–425 show a composition bias toward basic and acidic residues; that stretch reads TSDKLDGTASEDGRV. The interval 444–580 is interaction with microtubules, MAPRE1 and MAPRE3; sequence RGRSRTKMVS…GPGYGISQSS (137 aa). Residues 453–467 are compositionally biased toward low complexity; sequence SQSQPGSRSGSPGRV. Phosphoserine is present on residues S455, S459, S463, S478, and S489. The tract at residues 488–557 is disordered; the sequence is ASAQKRSKIP…PLASRHHSRS (70 aa). Residues 494–497 carry the SXIP motif 1; mediates interaction with MAPRE1 and targeting to microtubule plus ends motif; that stretch reads SKIP. S507 bears the Phosphoserine mark. The SXIP motif 2; mediates interaction with MAPRE1 and targeting to microtubule plus ends motif lies at 517-520; it reads SRIP. Residues S525, S529, S585, S587, S596, S621, and S627 each carry the phosphoserine modification. Residues 617–645 form a disordered region; the sequence is YGMHSDDDANSDASSACSERSYSSRNGSI. Residues 627–641 are compositionally biased toward low complexity; it reads SDASSACSERSYSSR. A TOG 2 region spans residues 649 to 881; it reads MRQTEDVAEV…TKLLHNHLRN (233 aa). 2 HEAT repeats span residues 710–747 and 772–809; these read RVFSMFLETLVDFIQVHKDDLQDWLFVLLTQLLKKMGA and LQFNILMRFTVDQTQTPSLKVKVAILKYIETLAKQMDP. T787 bears the Phosphothreonine mark. Residues 872–1294 form an interaction with RSN and localization to the Golgi and kinetochores region; that stretch reads TKLLHNHLRN…DPTTDVSGQS (423 aa). Disordered stretches follow at residues 878-928 and 952-995; these read HLRN…FDYD and SFRS…DSSQ. 2 stretches are compositionally biased toward polar residues: residues 880–892 and 901–922; these read RNTGNGTQSSMGS and SPANWSSPLTSPTNTSQNTLSP. The residue at position 892 (S892) is a Phosphoserine. 4 positions are modified to phosphoserine: S952, S955, S1013, and S1029. Residues 955-972 are compositionally biased toward basic and acidic residues; sequence SQEDMNEPLKRDSKKDDG. A required for cortical localization region spans residues 1017 to 1294; the sequence is RDYNPYNYSD…DPTTDVSGQS (278 aa). HEAT repeat units lie at residues 1054–1091, 1098–1135, and 1216–1253; these read LDHSDLVAELLKELSNHNERVEERKIALYELMKLTQEE, EHFKTILLLLLETLGDKEPTIRALALKVLREILRHQPA, and LLLPEIMPGLIQGYDNSESSVRKACVFCLVAVHAVIGD.

This sequence belongs to the CLASP family. As to quaternary structure, interacts with microtubules. Interacts with MAPRE1; probably required for targeting to the growing microtubule plus ends. Interacts with CLIP2, ERC1, MAPRE3, PHLDB2 and RSN. The interaction with ERC1 may be mediated by PHLDB2. Interacts with GCC2; recruits CLASP2 to Golgi membranes. Interacts with MACF1. Interacts with mtcl2 and MTCL1. In terms of processing, phosphorylated by GSK3B. Phosphorylation reduces MAPRE1 binding. Phosphorylation by GSK3B may negatively regulate binding to microtubule lattices in lamella. Brain-specific.

The protein resides in the cytoplasm. Its subcellular location is the cytoskeleton. It is found in the microtubule organizing center. The protein localises to the centrosome. It localises to the chromosome. The protein resides in the centromere. Its subcellular location is the kinetochore. It is found in the spindle. The protein localises to the golgi apparatus. It localises to the trans-Golgi network. The protein resides in the cell membrane. Its subcellular location is the cell projection. It is found in the ruffle membrane. The protein localises to the cell cortex. In terms of biological role, microtubule plus-end tracking protein that promotes the stabilization of dynamic microtubules. Involved in the nucleation of noncentrosomal microtubules originating from the trans-Golgi network (TGN). Required for the polarization of the cytoplasmic microtubule arrays in migrating cells towards the leading edge of the cell. May act at the cell cortex to enhance the frequency of rescue of depolymerizing microtubules by attaching their plus-ends to cortical platforms composed of ERC1 and PHLDB2. This cortical microtubule stabilizing activity is regulated at least in part by phosphatidylinositol 3-kinase signaling. Also performs a similar stabilizing function at the kinetochore which is essential for the bipolar alignment of chromosomes on the mitotic spindle. Acts as a mediator of ERBB2-dependent stabilization of microtubules at the cell cortex. This Homo sapiens (Human) protein is CLIP-associating protein 2 (CLASP2).